Here is a 346-residue protein sequence, read N- to C-terminus: Tetraacyldisaccharide 4'-kinase (346 aa).

54-61 (TVGGAGKT) provides a ligand contact to ATP.

Belongs to the LpxK family.

It catalyses the reaction a lipid A disaccharide + ATP = a lipid IVA + ADP + H(+). It functions in the pathway glycolipid biosynthesis; lipid IV(A) biosynthesis; lipid IV(A) from (3R)-3-hydroxytetradecanoyl-[acyl-carrier-protein] and UDP-N-acetyl-alpha-D-glucosamine: step 6/6. Transfers the gamma-phosphate of ATP to the 4'-position of a tetraacyldisaccharide 1-phosphate intermediate (termed DS-1-P) to form tetraacyldisaccharide 1,4'-bis-phosphate (lipid IVA). The sequence is that of Tetraacyldisaccharide 4'-kinase from Rhizobium etli (strain ATCC 51251 / DSM 11541 / JCM 21823 / NBRC 15573 / CFN 42).